The primary structure comprises 80 residues: Cell division protein ZapB (80 aa).

Positions 3 to 80 form a coiled coil; the sequence is FEVLEQLEAK…NLLGKMDDVE (78 aa).

The protein belongs to the ZapB family. As to quaternary structure, homodimer. The ends of the coiled-coil dimer bind to each other, forming polymers. Interacts with FtsZ.

The protein localises to the cytoplasm. In terms of biological role, non-essential, abundant cell division factor that is required for proper Z-ring formation. It is recruited early to the divisome by direct interaction with FtsZ, stimulating Z-ring assembly and thereby promoting cell division earlier in the cell cycle. Its recruitment to the Z-ring requires functional FtsA or ZipA. This Vibrio atlanticus (strain LGP32) (Vibrio splendidus (strain Mel32)) protein is Cell division protein ZapB.